A 162-amino-acid chain; its full sequence is UPF0460 protein y4vQ (162 aa).

Belongs to the UPF0460 family.

The polypeptide is UPF0460 protein y4vQ (Sinorhizobium fredii (strain NBRC 101917 / NGR234)).